We begin with the raw amino-acid sequence, 332 residues long: Phosphate acyltransferase (332 aa).

It belongs to the PlsX family. In terms of assembly, homodimer. Probably interacts with PlsY.

The protein localises to the cytoplasm. It catalyses the reaction a fatty acyl-[ACP] + phosphate = an acyl phosphate + holo-[ACP]. It participates in lipid metabolism; phospholipid metabolism. Functionally, catalyzes the reversible formation of acyl-phosphate (acyl-PO(4)) from acyl-[acyl-carrier-protein] (acyl-ACP). This enzyme utilizes acyl-ACP as fatty acyl donor, but not acyl-CoA. In Sulfurimonas denitrificans (strain ATCC 33889 / DSM 1251) (Thiomicrospira denitrificans (strain ATCC 33889 / DSM 1251)), this protein is Phosphate acyltransferase.